Here is a 340-residue protein sequence, read N- to C-terminus: DNA-directed RNA polymerase subunit alpha (340 aa).

The tract at residues 1 to 233 (MIRDEISVST…DLFIPFLRAE (233 aa)) is alpha N-terminal domain (alpha-NTD). The tract at residues 268 to 340 (AFKHIFIDQS…DLPKNKFQIH (73 aa)) is alpha C-terminal domain (alpha-CTD).

This sequence belongs to the RNA polymerase alpha chain family. As to quaternary structure, in plastids the minimal PEP RNA polymerase catalytic core is composed of four subunits: alpha, beta, beta', and beta''. When a (nuclear-encoded) sigma factor is associated with the core the holoenzyme is formed, which can initiate transcription.

Its subcellular location is the plastid. The protein localises to the chloroplast. It carries out the reaction RNA(n) + a ribonucleoside 5'-triphosphate = RNA(n+1) + diphosphate. Functionally, DNA-dependent RNA polymerase catalyzes the transcription of DNA into RNA using the four ribonucleoside triphosphates as substrates. This chain is DNA-directed RNA polymerase subunit alpha, found in Cycas taitungensis (Prince sago).